Reading from the N-terminus, the 300-residue chain is Cation-efflux pump FieF (300 aa).

6 helical membrane-spanning segments follow: residues 12–32, 39–59, 82–102, 114–134, 151–171, and 172–192; these read AAIA…FAWW, ILAA…NLLV, AALA…LTGI, PGVG…LVSF, MLHY…LALS, and WYGW…YILY. Zn(2+)-binding residues include Asp45 and Asp49. His153 and Asp157 together coordinate Zn(2+).

The protein belongs to the cation diffusion facilitator (CDF) transporter (TC 2.A.4) family. FieF subfamily. As to quaternary structure, homodimer.

It is found in the cell inner membrane. It carries out the reaction Zn(2+)(in) + H(+)(out) = Zn(2+)(out) + H(+)(in). The enzyme catalyses Cd(2+)(in) + H(+)(out) = Cd(2+)(out) + H(+)(in). The catalysed reaction is Fe(2+)(in) + H(+)(out) = Fe(2+)(out) + H(+)(in). In terms of biological role, divalent metal cation transporter which exports Zn(2+), Cd(2+) and possibly Fe(2+). May be involved in zinc and iron detoxification by efflux. This chain is Cation-efflux pump FieF, found in Escherichia fergusonii (strain ATCC 35469 / DSM 13698 / CCUG 18766 / IAM 14443 / JCM 21226 / LMG 7866 / NBRC 102419 / NCTC 12128 / CDC 0568-73).